Consider the following 403-residue polypeptide: MEPAGPCGFCPAGEVQPARYTCPRCNAPYCSLRCYRTHGTCAENFYRDQVLGELRGCSAPPSRLASALRRLRQQRETEDEPGEAGLSSGPAPGGLSGLWERLAPGEKAAFERLLSRGEAGRLLPPWRPWWWNRGAGPQLLEELDNAPGSDAAELELAPARTPPDSVKDASAAEPAAAERVLGDVPGACTPVVPTRIPAIVSLSRGPVSPLVRFQLPNVLFAYAHTLALYHGGDDALLSDFCATLLGVSGALGAQQVFASAEEALQAAAHVLEAGEHPPGPLGTRGAMHEVARILLGEGPTNQKGYTLAALGDLAQTLGRARKQAVAREERDHLYRARKKCQFLLAWTNENEAALTPLALDCARAHQAHAVVAEEVAALTGELERLWGGPVPPAPRTLIEELPS.

Met1 is modified (N-acetylmethionine). Residues Cys7, Cys10, Cys22, Cys25, Cys30, Cys34, His38, and Cys41 each contribute to the Zn(2+) site. The HIT-type zinc-finger motif lies at 7–41 (CGFCPAGEVQPARYTCPRCNAPYCSLRCYRTHGTC). Residues 72–98 (RQQRETEDEPGEAGLSSGPAPGGLSGL) are disordered. Thr161 carries the post-translational modification Phosphothreonine.

As to quaternary structure, interacts (via HIT-type zinc finger) with RUVBL2 in the presence of ATP or ADP; shows a stronger interaction in the presence of ADP. As to expression, low expression in most tissues; highly expressed in testis.

In terms of biological role, may act as a bridging factor mediating the interaction between the R2TP/Prefoldin-like (R2TP/PFDL) complex and U5 small nuclear ribonucleoprotein (U5 snRNP). Required for the interaction of R2TP complex subunit RPAP3 and prefoldin-like subunit URI1 with U5 snRNP proteins EFTUD2 and PRPF8. May play a role in regulating the composition of the U5 snRNP complex. This Homo sapiens (Human) protein is Zinc finger HIT domain-containing protein 2 (ZNHIT2).